A 358-amino-acid chain; its full sequence is Peptide chain release factor 1 (358 aa).

Glutamine 233 carries the N5-methylglutamine modification.

This sequence belongs to the prokaryotic/mitochondrial release factor family. In terms of processing, methylated by PrmC. Methylation increases the termination efficiency of RF1.

It localises to the cytoplasm. In terms of biological role, peptide chain release factor 1 directs the termination of translation in response to the peptide chain termination codons UAG and UAA. In Staphylococcus aureus (strain MSSA476), this protein is Peptide chain release factor 1.